A 303-amino-acid polypeptide reads, in one-letter code: Cell division protein ZipA (303 aa).

The Periplasmic portion of the chain corresponds to 1–6 (MMQDLR). A helical membrane pass occupies residues 7 to 27 (LILIIVGAIAIIALLLHGLWT). Over 28 to 303 (SRKERSSLFR…RIRSTLGVQV (276 aa)) the chain is Cytoplasmic. Disordered stretches follow at residues 39–61 (RPVKRHKHDRQNSFVDDSDDEAF), 66–85 (KPYAHKQVKSHQEYKAEPAI), and 124–159 (EQEPQLGLFEFEEQNESERNGSAIEEKSQEAAGEKE). Basic and acidic residues-rich tracts occupy residues 75 to 85 (SHQEYKAEPAI) and 139 to 159 (ESERNGSAIEEKSQEAAGEKE).

It belongs to the ZipA family. Interacts with FtsZ via their C-terminal domains.

Its subcellular location is the cell inner membrane. Essential cell division protein that stabilizes the FtsZ protofilaments by cross-linking them and that serves as a cytoplasmic membrane anchor for the Z ring. Also required for the recruitment to the septal ring of downstream cell division proteins. The polypeptide is Cell division protein ZipA (Photorhabdus laumondii subsp. laumondii (strain DSM 15139 / CIP 105565 / TT01) (Photorhabdus luminescens subsp. laumondii)).